Here is a 528-residue protein sequence, read N- to C-terminus: (R)-citramalate synthase (528 aa).

In terms of domain architecture, Pyruvate carboxyltransferase spans 5 to 271 (VYIYDTTLRD…IPQENLKKLT (267 aa)).

The protein belongs to the alpha-IPM synthase/homocitrate synthase family.

The enzyme catalyses pyruvate + acetyl-CoA + H2O = (3R)-citramalate + CoA + H(+). Its pathway is amino-acid biosynthesis; L-isoleucine biosynthesis; 2-oxobutanoate from pyruvate: step 1/3. In terms of biological role, catalyzes the condensation of pyruvate and acetyl-coenzyme A to form (R)-citramalate. The sequence is that of (R)-citramalate synthase from Aquifex aeolicus (strain VF5).